We begin with the raw amino-acid sequence, 424 residues long: Serine--tRNA ligase (424 aa).

Residues 1–15 (MIDPKLLRTDPDAVR) show a composition bias toward basic and acidic residues. A disordered region spans residues 1-27 (MIDPKLLRTDPDAVRRSQAARGEDSSV). 230–232 (TSE) contacts L-serine. ATP contacts are provided by residues 261–263 (RRE) and Val277. An L-serine-binding site is contributed by Glu284. 348–351 (EITS) is a binding site for ATP. Thr382 contacts L-serine.

Belongs to the class-II aminoacyl-tRNA synthetase family. Type-1 seryl-tRNA synthetase subfamily. As to quaternary structure, homodimer. The tRNA molecule binds across the dimer.

The protein localises to the cytoplasm. The catalysed reaction is tRNA(Ser) + L-serine + ATP = L-seryl-tRNA(Ser) + AMP + diphosphate + H(+). It carries out the reaction tRNA(Sec) + L-serine + ATP = L-seryl-tRNA(Sec) + AMP + diphosphate + H(+). The protein operates within aminoacyl-tRNA biosynthesis; selenocysteinyl-tRNA(Sec) biosynthesis; L-seryl-tRNA(Sec) from L-serine and tRNA(Sec): step 1/1. Its function is as follows. Catalyzes the attachment of serine to tRNA(Ser). Is also able to aminoacylate tRNA(Sec) with serine, to form the misacylated tRNA L-seryl-tRNA(Sec), which will be further converted into selenocysteinyl-tRNA(Sec). The polypeptide is Serine--tRNA ligase (Cutibacterium acnes (strain DSM 16379 / KPA171202) (Propionibacterium acnes)).